Reading from the N-terminus, the 206-residue chain is Uracil phosphoribosyltransferase (206 aa).

5-phospho-alpha-D-ribose 1-diphosphate contacts are provided by residues arginine 76, arginine 101, and 128–136 (DPMLATGGS). Residues isoleucine 191 and 196–198 (GDA) each bind uracil. 5-phospho-alpha-D-ribose 1-diphosphate is bound at residue aspartate 197.

This sequence belongs to the UPRTase family. Mg(2+) is required as a cofactor.

The catalysed reaction is UMP + diphosphate = 5-phospho-alpha-D-ribose 1-diphosphate + uracil. Its pathway is pyrimidine metabolism; UMP biosynthesis via salvage pathway; UMP from uracil: step 1/1. Allosterically activated by GTP. Catalyzes the conversion of uracil and 5-phospho-alpha-D-ribose 1-diphosphate (PRPP) to UMP and diphosphate. This chain is Uracil phosphoribosyltransferase, found in Malacoplasma penetrans (strain HF-2) (Mycoplasma penetrans).